Consider the following 203-residue polypeptide: Small ribosomal subunit protein uS4 (203 aa).

Residues 93 to 153 form the S4 RNA-binding domain; the sequence is QRLDSVVYRL…EKSKNILPIQ (61 aa).

Belongs to the universal ribosomal protein uS4 family. Part of the 30S ribosomal subunit. Contacts protein S5. The interaction surface between S4 and S5 is involved in control of translational fidelity.

Its function is as follows. One of the primary rRNA binding proteins, it binds directly to 16S rRNA where it nucleates assembly of the body of the 30S subunit. With S5 and S12 plays an important role in translational accuracy. This Leuconostoc mesenteroides subsp. mesenteroides (strain ATCC 8293 / DSM 20343 / BCRC 11652 / CCM 1803 / JCM 6124 / NCDO 523 / NBRC 100496 / NCIMB 8023 / NCTC 12954 / NRRL B-1118 / 37Y) protein is Small ribosomal subunit protein uS4.